The following is a 937-amino-acid chain: Isoleucine--tRNA ligase (937 aa).

The short motif at 58 to 68 (PYANGNIHIGH) is the 'HIGH' region element. E560 contributes to the L-isoleucyl-5'-AMP binding site. A 'KMSKS' region motif is present at residues 601-605 (KMSKS). An ATP-binding site is contributed by K604. 4 residues coordinate Zn(2+): C900, C903, C920, and C923.

This sequence belongs to the class-I aminoacyl-tRNA synthetase family. IleS type 1 subfamily. In terms of assembly, monomer. Zn(2+) serves as cofactor.

The protein localises to the cytoplasm. The enzyme catalyses tRNA(Ile) + L-isoleucine + ATP = L-isoleucyl-tRNA(Ile) + AMP + diphosphate. Catalyzes the attachment of isoleucine to tRNA(Ile). As IleRS can inadvertently accommodate and process structurally similar amino acids such as valine, to avoid such errors it has two additional distinct tRNA(Ile)-dependent editing activities. One activity is designated as 'pretransfer' editing and involves the hydrolysis of activated Val-AMP. The other activity is designated 'posttransfer' editing and involves deacylation of mischarged Val-tRNA(Ile). The sequence is that of Isoleucine--tRNA ligase from Thioalkalivibrio sulfidiphilus (strain HL-EbGR7).